The following is a 164-amino-acid chain: Small ribosomal subunit protein uS5 (164 aa).

One can recognise an S5 DRBM domain in the interval 11-74 (LKEKLISVNR…EKARKNMIII (64 aa)).

Belongs to the universal ribosomal protein uS5 family. In terms of assembly, part of the 30S ribosomal subunit. Contacts proteins S4 and S8.

Its function is as follows. With S4 and S12 plays an important role in translational accuracy. In terms of biological role, located at the back of the 30S subunit body where it stabilizes the conformation of the head with respect to the body. The protein is Small ribosomal subunit protein uS5 of Buchnera aphidicola subsp. Cinara cedri (strain Cc).